Here is a 129-residue protein sequence, read N- to C-terminus: Fluoride-specific ion channel FluC (129 aa).

4 helical membrane-spanning segments follow: residues 8 to 28 (ILLV…VALW), 34 to 54 (AVFP…IGFI), 70 to 90 (IFLV…MIEH), and 102 to 122 (AALY…LGII). Residues G78 and T81 each contribute to the Na(+) site.

This sequence belongs to the fluoride channel Fluc/FEX (TC 1.A.43) family.

Its subcellular location is the cell inner membrane. The catalysed reaction is fluoride(in) = fluoride(out). Its activity is regulated as follows. Na(+) is not transported, but it plays an essential structural role and its presence is essential for fluoride channel function. Its function is as follows. Fluoride-specific ion channel. Important for reducing fluoride concentration in the cell, thus reducing its toxicity. The polypeptide is Fluoride-specific ion channel FluC (Chlorobium chlorochromatii (strain CaD3)).